We begin with the raw amino-acid sequence, 271 residues long: Formamidopyrimidine-DNA glycosylase (271 aa).

The active-site Schiff-base intermediate with DNA is the Pro2. Glu3 (proton donor) is an active-site residue. Lys58 acts as the Proton donor; for beta-elimination activity in catalysis. His90, Arg108, and Arg151 together coordinate DNA. The FPG-type; degenerate zinc-finger motif lies at 236-271 (QVYGRDGQPCHRDDGGTIRRFAQGGRSTWYCPRCQR). Arg261 acts as the Proton donor; for delta-elimination activity in catalysis.

It belongs to the FPG family. As to quaternary structure, monomer. Zn(2+) is required as a cofactor.

It catalyses the reaction Hydrolysis of DNA containing ring-opened 7-methylguanine residues, releasing 2,6-diamino-4-hydroxy-5-(N-methyl)formamidopyrimidine.. The catalysed reaction is 2'-deoxyribonucleotide-(2'-deoxyribose 5'-phosphate)-2'-deoxyribonucleotide-DNA = a 3'-end 2'-deoxyribonucleotide-(2,3-dehydro-2,3-deoxyribose 5'-phosphate)-DNA + a 5'-end 5'-phospho-2'-deoxyribonucleoside-DNA + H(+). In terms of biological role, involved in base excision repair of DNA damaged by oxidation or by mutagenic agents. Acts as a DNA glycosylase that recognizes and removes damaged bases. Has a preference for oxidized purines, such as 7,8-dihydro-8-oxoguanine (8-oxoG). Has AP (apurinic/apyrimidinic) lyase activity and introduces nicks in the DNA strand. Cleaves the DNA backbone by beta-delta elimination to generate a single-strand break at the site of the removed base with both 3'- and 5'-phosphates. The chain is Formamidopyrimidine-DNA glycosylase from Erythrobacter litoralis (strain HTCC2594).